A 450-amino-acid polypeptide reads, in one-letter code: Probable helicase D10 (450 aa).

One can recognise a Helicase ATP-binding domain in the interval 95 to 240 (PIYEECDDTC…MFKDFFGYKI (146 aa)). Position 108–115 (108–115 (GKPGFGKT)) interacts with ATP. The short motif at 193 to 196 (DEVH) is the DEAH box element. One can recognise a Helicase C-terminal domain in the interval 289 to 439 (NLAHLYVNMG…TITMTPEKAV (151 aa)).

The enzyme catalyses ATP + H2O = ADP + phosphate + H(+). In Escherichia phage T5 (Enterobacteria phage T5), this protein is Probable helicase D10 (D10).